The chain runs to 164 residues: B-phycoerythrin alpha chain (164 aa).

Cys-82 and Cys-139 together coordinate (2R,3E)-phycoerythrobilin.

Belongs to the phycobiliprotein family. As to quaternary structure, heteromer of 6 alpha, 6 beta and one gamma chain. Contains two covalently linked bilin chromophores.

The protein localises to the plastid. Its subcellular location is the chloroplast thylakoid membrane. In terms of biological role, light-harvesting photosynthetic bile pigment-protein from the phycobiliprotein complex. In Rhodella violacea (Red alga), this protein is B-phycoerythrin alpha chain (cpeA).